A 1461-amino-acid polypeptide reads, in one-letter code: Potassium channel K2 (1461 aa).

6 consecutive transmembrane segments (helical) span residues 44 to 64 (IIEG…LIYI), 142 to 162 (FNYY…YISL), 183 to 203 (IYNM…MVII), 218 to 238 (LIDI…IFVF), 242 to 262 (IDIY…NVSY), and 281 to 301 (IVLG…TIQA). An intramembrane region (pore-forming) is located at residues 322 to 340 (YFYFSIISISTVGYGDIFP). A helical transmembrane segment spans residues 349–369 (CIIFIFWTFIWVPIQFNDLII). Residues 771–794 (KRDDFDNNNNNNNNNIVKSRKKGR) form a disordered region.

May form oligomers or interact with other proteins.

The protein localises to the membrane. Contributes to transmembrane potassium transport. This is Potassium channel K2 from Plasmodium falciparum (isolate 3D7).